Consider the following 337-residue polypeptide: uncharacterized protein (337 aa).

Positions 248-276 (NELKAETTIQVLREQLRQEKKLKEQVLSL) form a coiled coil. The disordered stretch occupies residues 285–337 (GGRGEEFGKPDETPSSASVGDDNFPSSTNHTFEARRRPSSLSSGGALKPSKIL). Basic and acidic residues predominate over residues 287–296 (RGEEFGKPDE). Positions 297-315 (TPSSASVGDDNFPSSTNHT) are enriched in polar residues.

This is an uncharacterized protein from Invertebrate iridescent virus 3 (IIV-3).